The following is a 463-amino-acid chain: Rop guanine nucleotide exchange factor 4 (463 aa).

Disordered regions lie at residues 1–25 (MESSSNSDQNEGTPTSSVSSPYRRT) and 55–87 (GHEEDVSEDAEEPKDDVVNDVHGDGDEEDSDID). Residues 59–68 (DVSEDAEEPK) show a composition bias toward acidic residues. Residues 69-78 (DDVVNDVHGD) are compositionally biased toward basic and acidic residues. The PRONE domain maps to 84-463 (SDIDSAEDAE…VDRTVRNRDD (380 aa)).

As to quaternary structure, interacts with ARAC10/ROP11. Expressed in root vascular tissue and trichoblast cell files. Expressed in root metaxylem cell files. Expressed in guard cells of cotyledons, rosette leaves, sepals, petal, stigmas and siliques. Expressed in root metaxylem cell files.

Its subcellular location is the cytoplasm. The protein localises to the cell membrane. In terms of biological role, guanine-nucleotide exchange factor (GEF) that acts as an activator of Rop (Rho of plants) GTPases by promoting the exchange of GDP for GTP. In association with ROPGEF1, acts as a specific regulator of ARAC10/ROP11 function in ABA-mediated stomatal closure. The sequence is that of Rop guanine nucleotide exchange factor 4 (ROPGEF4) from Arabidopsis thaliana (Mouse-ear cress).